We begin with the raw amino-acid sequence, 596 residues long: MLNLCHALRGVRQFSCSVIVKVKCASCSIKLQDQDPSKPGYYTKPKSLPDSKLNPDLQDLKYLLFSQDIQLSKQAIQNDPDLKTKRDLLLRVICKRCSNALHHNNYNPEEFPESTLNDILNYVPRGSNVMHIVPFVEFPLHLDPNVLKRNDLETTLVLTKSDQVFKDKNAVSKKVPIFMKQFLKNTLRIDSNKTFAISALKNWNISMFYNYFKNYTYLLGNPNVGKSTLINTLLQKYLGYKVKIDSTGKINSPSEEVMQEAFTNPKNFFKIQAAGVSHIPNLTRSVQAYQVGGKILFDLPGYSTSTSRLRLEEPIDERWLQRLRKTDLFNRKHIKQKTYESMKGTSQGGCYTVGGIFYLVPPKGSINQIVKYIPGPSKTFKNIEKGIDVFNSCNSSSGTHPLSRYCGIKSVICEKSQYKRYAIPPFIGSIEIVLKDIGYILLRTTGRYEFKGLHEIWIPRGIQVGIREPLENLIESGYQRYIETNGKESSCPRDRPIISSLYEMAPDEADTLNAVKKSYLEKTEKDLSARRFVDDDPYDLVQHLRKKKESLLVLPMVRLAVHLVAPISSNAHVNMNVSKLKRKLGTKYIQKRIYRK.

The transit peptide at 1-21 (MLNLCHALRGVRQFSCSVIVK) directs the protein to the mitochondrion. The 193-residue stretch at 113–305 (ESTLNDILNY…LFDLPGYSTS (193 aa)) folds into the CP-type G domain.

It belongs to the TRAFAC class YlqF/YawG GTPase family. GEP3 subfamily.

It localises to the mitochondrion. Interacts genetically with prohibitins and thus may be involved in the mitochondrial lipid metabolism. The polypeptide is Genetic interactor of prohibitins 3, mitochondrial (GEP3) (Saccharomyces cerevisiae (strain AWRI796) (Baker's yeast)).